The chain runs to 488 residues: Ribulose bisphosphate carboxylase large chain (488 aa).

Substrate-binding residues include N128 and T178. K180 serves as the catalytic Proton acceptor. K182 provides a ligand contact to substrate. Residues K206, D208, and E209 each coordinate Mg(2+). K206 carries the post-translational modification N6-carboxylysine. The active-site Proton acceptor is H298. Substrate contacts are provided by R299, H331, and S383.

It belongs to the RuBisCO large chain family. Type I subfamily. Heterohexadecamer of 8 large chains and 8 small chains. Mg(2+) is required as a cofactor.

The enzyme catalyses 2 (2R)-3-phosphoglycerate + 2 H(+) = D-ribulose 1,5-bisphosphate + CO2 + H2O. The catalysed reaction is D-ribulose 1,5-bisphosphate + O2 = 2-phosphoglycolate + (2R)-3-phosphoglycerate + 2 H(+). Its function is as follows. RuBisCO catalyzes two reactions: the carboxylation of D-ribulose 1,5-bisphosphate, the primary event in carbon dioxide fixation, as well as the oxidative fragmentation of the pentose substrate. Both reactions occur simultaneously and in competition at the same active site. This Xanthobacter autotrophicus (strain ATCC BAA-1158 / Py2) protein is Ribulose bisphosphate carboxylase large chain.